The following is a 407-amino-acid chain: Phosphoglycerate kinase (407 aa).

Residues Asp-24 to Asn-26, Arg-39, His-60 to Arg-63, Arg-117, and Arg-157 each bind substrate. Residues Glu-330 and Gly-355–Ile-358 each bind ATP.

This sequence belongs to the phosphoglycerate kinase family.

It localises to the cytoplasm. The enzyme catalyses (2R)-3-phosphoglycerate + ATP = (2R)-3-phospho-glyceroyl phosphate + ADP. The protein operates within carbohydrate degradation; glycolysis; pyruvate from D-glyceraldehyde 3-phosphate: step 2/5. The chain is Phosphoglycerate kinase (pgk) from Archaeoglobus fulgidus (strain ATCC 49558 / DSM 4304 / JCM 9628 / NBRC 100126 / VC-16).